Consider the following 237-residue polypeptide: Uracil-DNA glycosylase (237 aa).

The active-site Proton acceptor is the D77.

Belongs to the uracil-DNA glycosylase (UDG) superfamily. UNG family.

The protein resides in the cytoplasm. It carries out the reaction Hydrolyzes single-stranded DNA or mismatched double-stranded DNA and polynucleotides, releasing free uracil.. Excises uracil residues from the DNA which can arise as a result of misincorporation of dUMP residues by DNA polymerase or due to deamination of cytosine. This is Uracil-DNA glycosylase from Acinetobacter baumannii (strain AB307-0294).